The chain runs to 554 residues: Hydroxylamine reductase (554 aa).

[2Fe-2S] cluster contacts are provided by Cys3, Cys6, Cys18, and Cys25. Residues His252, Glu276, Cys320, Cys408, Cys436, Cys461, Glu495, and Lys497 each contribute to the hybrid [4Fe-2O-2S] cluster site. Cys408 carries the cysteine persulfide modification.

It belongs to the HCP family. [2Fe-2S] cluster is required as a cofactor. The cofactor is hybrid [4Fe-2O-2S] cluster.

The protein localises to the cytoplasm. The enzyme catalyses A + NH4(+) + H2O = hydroxylamine + AH2 + H(+). Functionally, catalyzes the reduction of hydroxylamine to form NH(3) and H(2)O. The sequence is that of Hydroxylamine reductase from Shewanella pealeana (strain ATCC 700345 / ANG-SQ1).